The chain runs to 377 residues: MKLKFDLKKKNGNARRGQLTFERGTVQTPAFMPVGTYGTVKGMTPEEVKGTGAEILLGNTFHLWLRPGQEVMKMHGDLHDFMNWHGPILTDSGGFQVFSLGKMRTITEKGVHFRNPVNGDKIFMDAEKSMEIQKDLGSDIVMIFDECTPYPATHNEAKKSMEMSLRWAQRSRDHFDKLENPNNLFGIVQGGVYEDLRDVSVKGLTEIGFDGYAVGGLAVGEPKEDMHRILEHTCPQLPEDKPRYLMGVGKPEDLVEGVRRGIDMFDCVMPTRNARNGHLFVTGGVIKIRNAKHKTDTTPLDPHCDCYTCQNYSKSYLHHLERCNEILGARLNTIHNLRYYQRLMESIRKAIDEDRFDEFVQEFYARRDREVPPLSKA.

Asp91 (proton acceptor) is an active-site residue. Residues 91–95, Asp145, Gln189, and Gly216 each bind substrate; that span reads DSGGF. An RNA binding region spans residues 247–253; it reads GVGKPED. Catalysis depends on Asp266, which acts as the Nucleophile. The interval 271-275 is RNA binding; important for wobble base 34 recognition; that stretch reads TRNAR. Residues Cys304, Cys306, Cys309, and His335 each contribute to the Zn(2+) site.

This sequence belongs to the queuine tRNA-ribosyltransferase family. As to quaternary structure, homodimer. Within each dimer, one monomer is responsible for RNA recognition and catalysis, while the other monomer binds to the replacement base PreQ1. It depends on Zn(2+) as a cofactor.

The enzyme catalyses 7-aminomethyl-7-carbaguanine + guanosine(34) in tRNA = 7-aminomethyl-7-carbaguanosine(34) in tRNA + guanine. It participates in tRNA modification; tRNA-queuosine biosynthesis. Functionally, catalyzes the base-exchange of a guanine (G) residue with the queuine precursor 7-aminomethyl-7-deazaguanine (PreQ1) at position 34 (anticodon wobble position) in tRNAs with GU(N) anticodons (tRNA-Asp, -Asn, -His and -Tyr). Catalysis occurs through a double-displacement mechanism. The nucleophile active site attacks the C1' of nucleotide 34 to detach the guanine base from the RNA, forming a covalent enzyme-RNA intermediate. The proton acceptor active site deprotonates the incoming PreQ1, allowing a nucleophilic attack on the C1' of the ribose to form the product. After dissociation, two additional enzymatic reactions on the tRNA convert PreQ1 to queuine (Q), resulting in the hypermodified nucleoside queuosine (7-(((4,5-cis-dihydroxy-2-cyclopenten-1-yl)amino)methyl)-7-deazaguanosine). In Vibrio parahaemolyticus serotype O3:K6 (strain RIMD 2210633), this protein is Queuine tRNA-ribosyltransferase.